The chain runs to 274 residues: Reaction center protein L chain (274 aa).

At 2 to 32 (ALLSFERKYRVRGGTLIGGDLFDFWVGPYFV) the chain is on the cytoplasmic side. Residues 33 to 53 (GFFGVSAIFFIFLGVSLIGYA) form a helical membrane-spanning segment. Over 54–83 (ASQGPTWDPFAISINPPDLKYGLGAAPLLE) the chain is Periplasmic. Residues 84-111 (GGFWQAITVCALGAFISWMLREVEISRK) form a helical membrane-spanning segment. The Cytoplasmic segment spans residues 112 to 115 (LGIG). The chain crosses the membrane as a helical span at residues 116–139 (WHVPLAFCVPIFMFCVLQVFRPLL). The Periplasmic segment spans residues 140-170 (LGSWGHAFPYGILSHLDWVNNFGYQYLNWHY). The (7R,8Z)-bacteriochlorophyll b site is built by H154 and H174. The helical transmembrane segment at 171–198 (NPGHMSSVSFLFVNAMALGLHGGLILSV) threads the bilayer. Residue H191 coordinates Fe cation. The Cytoplasmic portion of the chain corresponds to 199–225 (ANPGDGDKVKTAEHENQYFRDVVGYSI). F217 lines the a ubiquinone pocket. Residues 226-249 (GALSIHRLGLFLASNIFLTGAFGT) traverse the membrane as a helical segment. H231 serves as a coordination point for Fe cation. Over 250 to 274 (IASGPFWTRGWPEWWGWWLDIPFWS) the chain is Periplasmic.

This sequence belongs to the reaction center PufL/M/PsbA/D family. Reaction center is composed of four bacteriochlorophylls, two bacteriopheophytins, two ubiquinones, one iron, and three highly hydrophobic polypeptide chains (designated L, M, and H).

The protein resides in the cellular chromatophore membrane. In terms of biological role, the reaction center is a membrane-bound complex that mediates the initial photochemical event in the electron transfer process of photosynthesis. This is Reaction center protein L chain (pufL) from Blastochloris viridis (Rhodopseudomonas viridis).